The following is a 430-amino-acid chain: Enolase (430 aa).

Gln165 contributes to the (2R)-2-phosphoglycerate binding site. The Proton donor role is filled by Glu207. Positions 244, 287, and 314 each coordinate Mg(2+). (2R)-2-phosphoglycerate is bound by residues Lys339, Arg368, Ser369, and Lys390. Catalysis depends on Lys339, which acts as the Proton acceptor.

The protein belongs to the enolase family. Component of the RNA degradosome, a multiprotein complex involved in RNA processing and mRNA degradation. Mg(2+) is required as a cofactor.

It is found in the cytoplasm. The protein resides in the secreted. The protein localises to the cell surface. It carries out the reaction (2R)-2-phosphoglycerate = phosphoenolpyruvate + H2O. Its pathway is carbohydrate degradation; glycolysis; pyruvate from D-glyceraldehyde 3-phosphate: step 4/5. Catalyzes the reversible conversion of 2-phosphoglycerate (2-PG) into phosphoenolpyruvate (PEP). It is essential for the degradation of carbohydrates via glycolysis. The chain is Enolase from Stenotrophomonas maltophilia (strain R551-3).